Here is a 142-residue protein sequence, read N- to C-terminus: Hemoglobin subunit alpha-A (142 aa).

Residues 2-142 (VLTAGDKANV…VATALTSKYR (141 aa)) form the Globin domain. Residues H59 and H88 each coordinate heme b.

It belongs to the globin family. In terms of assembly, heterotetramer of two alpha-A chains and two beta chains. In terms of tissue distribution, red blood cells.

Involved in oxygen transport from the lung to the various peripheral tissues. In Chelonoidis niger (Galapagos giant tortoise), this protein is Hemoglobin subunit alpha-A.